A 715-amino-acid polypeptide reads, in one-letter code: Arginine kinase (715 aa).

2 Approximate repeats span residues 1–366 (MADP…IAKK) and 367–715 (RSVF…KSTK). The Phosphagen kinase N-terminal 1 domain maps to 11–95 (KSKNAFPDPL…FDAIIEDYHS (85 aa)). 68-72 (GVGVY) is a substrate binding site. A Phosphagen kinase C-terminal 1 domain is found at 123–362 (YIRSTRIRVA…KALMELEKEA (240 aa)). Residues 126-130 (STRIR) and His189 contribute to the ATP site. Glu229 serves as a coordination point for substrate. Arg233 contributes to the ATP binding site. Cys275 is a substrate binding site. ATP-binding positions include 284–288 (RASVH) and 312–317 (RGIHGE). Glu317 lines the substrate pocket. The 83-residue stretch at 365 to 447 (KKRSVFPEVL…FDKIVEDYHS (83 aa)) folds into the Phosphagen kinase N-terminal 2 domain. The Phosphagen kinase C-terminal 2 domain occupies 475–714 (YIRSTRIRVA…KKLLEIEKST (240 aa)).

Belongs to the ATP:guanido phosphotransferase family. Monomer.

It catalyses the reaction L-arginine + ATP = N(omega)-phospho-L-arginine + ADP + H(+). The chain is Arginine kinase from Anthopleura japonica (Sea anemone).